The following is a 600-amino-acid chain: Oligopeptide-binding protein OppA (600 aa).

Positions 1–22 (MNKLKVTLLASSVVLAATLLSA) are cleaved as a signal peptide. Residue Cys23 is the site of N-palmitoyl cysteine attachment. Cys23 is lipidated: S-diacylglycerol cysteine.

It belongs to the bacterial solute-binding protein 5 family. As to quaternary structure, the complex is composed of two ATP-binding proteins (OppD and OppF), two transmembrane proteins (OppB and OppC) and a solute-binding protein (OppA).

It is found in the cell membrane. In terms of biological role, part of the ABC transporter complex OppABCDF involved in the uptake of oligopeptides. Essential for uptake of peptides larger than three amino acids and for growth in milk. In Lactococcus lactis subsp. lactis (Streptococcus lactis), this protein is Oligopeptide-binding protein OppA.